Consider the following 358-residue polypeptide: Ethanol acetyltransferase 1 (358 aa).

The AB hydrolase-1 domain occupies 59-166 (PIVFIHGLFG…NAPINQPHIS (108 aa)). Catalysis depends on charge relay system residues Ser132, Asp156, and His305.

The protein belongs to the AB hydrolase superfamily.

Its subcellular location is the mitochondrion. The catalysed reaction is ethanol + acetyl-CoA = ethyl acetate + CoA. The enzyme catalyses acetyl-CoA + H2O = acetate + CoA + H(+). It carries out the reaction ethyl acetate + H2O = ethanol + acetate + H(+). Alcohol acetyltransferase that catalyzes the synthesis of ethyl acetate from ethanol and acetyl-CoA. Can also function as a thioesterase by hydrolyzing acetyl-CoA in the absence of ethanol, as well as esterase hydrolyzing ethyl acetate. In Eremothecium cymbalariae (strain CBS 270.75 / DBVPG 7215 / KCTC 17166 / NRRL Y-17582) (Yeast), this protein is Ethanol acetyltransferase 1 (EAT1).